The chain runs to 216 residues: Large ribosomal subunit protein uL3 (216 aa).

Glutamine 157 is modified (N5-methylglutamine).

This sequence belongs to the universal ribosomal protein uL3 family. In terms of assembly, part of the 50S ribosomal subunit. Forms a cluster with proteins L14 and L19. Post-translationally, methylated by PrmB.

Its function is as follows. One of the primary rRNA binding proteins, it binds directly near the 3'-end of the 23S rRNA, where it nucleates assembly of the 50S subunit. This chain is Large ribosomal subunit protein uL3, found in Xanthomonas oryzae pv. oryzae (strain MAFF 311018).